An 87-amino-acid chain; its full sequence is Protein WFDC11 (87 aa).

Positions 1-25 (MVSLMKLWIPMLMTFFCTVLLSVLG) are cleaved as a signal peptide.

Its subcellular location is the secreted. The chain is Protein WFDC11 (WFDC11) from Homo sapiens (Human).